We begin with the raw amino-acid sequence, 493 residues long: E3 ubiquitin-protein ligase Hakai (493 aa).

2 disordered regions span residues 1–20 (MDHNDNDLQGTNSSASLGGL) and 28–61 (IKLISKQTNKTKPAPRAPRAMNRMPAKTQAGDEE). A compositionally biased stretch (polar residues) spans 7–16 (DLQGTNSSAS). The RING-type zinc-finger motif lies at 109 to 149 (CDKCGLPIKMYGRMIPCKHVFCYDCAILHEKKGDKMCPGCN). The tract at residues 148–206 (CNEPVQRIEQCVRGSLFMCSIVQGCKRTYLSQRDLQAHINHRHMRAGKPVTRPPLEPVH) is HYB domain. Residues 164–190 (FMCSIVQGCKRTYLSQRDLQAHINHRH) form a C2H2-type zinc finger. A disordered region spans residues 253–493 (YNQPHEDIRP…DQARYRPYYQ (241 aa)). Pro residues-rich tracts occupy residues 262–276 (PPPAEMSMAPPPPRP), 342–352 (APPPPPPPPIS), 372–389 (APPPPMTSAPPPITPPPG), and 399–412 (MNHPPPGPPPPQHG). Over residues 427–444 (NPNSLPQFSEDQGTLSPP) the composition is skewed to polar residues. The segment covering 459-469 (PRGPPPPPRMQ) has biased composition (pro residues). Residues 470 to 480 (GPPAQAPLAGP) are compositionally biased toward low complexity.

This sequence belongs to the Hakai family. Homodimer. Interacts with tyrosine-phosphorylated SRC substrates. Component of the WMM complex, a N6-methyltransferase complex composed of a catalytic subcomplex, named MAC, and of an associated subcomplex, named MACOM. Component of the MACOM subcomplex.

The protein localises to the nucleus speckle. Its subcellular location is the nucleus. It localises to the nucleoplasm. It catalyses the reaction S-ubiquitinyl-[E2 ubiquitin-conjugating enzyme]-L-cysteine + [acceptor protein]-L-lysine = [E2 ubiquitin-conjugating enzyme]-L-cysteine + N(6)-ubiquitinyl-[acceptor protein]-L-lysine.. The protein operates within protein modification; protein ubiquitination. Functionally, E3 ubiquitin-protein ligase that mediates ubiquitination of several tyrosine-phosphorylated Src substrates. Associated component of the WMM complex, a complex that mediates N6-methyladenosine (m6A) methylation of RNAs, a modification that plays a role in the efficiency of mRNA splicing and RNA processing. The sequence is that of E3 ubiquitin-protein ligase Hakai from Gallus gallus (Chicken).